Consider the following 545-residue polypeptide: Methionine--tRNA ligase (545 aa).

The 'HIGH' region motif lies at 13 to 23 (PYANGEIHLGH). Zn(2+) contacts are provided by cysteine 144, cysteine 147, cysteine 157, and cysteine 160. Residues 329 to 333 (KMSKS) carry the 'KMSKS' region motif. Position 332 (lysine 332) interacts with ATP.

Belongs to the class-I aminoacyl-tRNA synthetase family. MetG type 1 subfamily. Monomer. Requires Zn(2+) as cofactor.

The protein resides in the cytoplasm. The catalysed reaction is tRNA(Met) + L-methionine + ATP = L-methionyl-tRNA(Met) + AMP + diphosphate. Is required not only for elongation of protein synthesis but also for the initiation of all mRNA translation through initiator tRNA(fMet) aminoacylation. This chain is Methionine--tRNA ligase, found in Vesicomyosocius okutanii subsp. Calyptogena okutanii (strain HA).